A 350-amino-acid polypeptide reads, in one-letter code: Adenine deaminase (350 aa).

Zn(2+) contacts are provided by H24, H26, and H207. E210 (proton donor) is an active-site residue. A Zn(2+)-binding site is contributed by D288. Position 289 (D289) interacts with substrate.

The protein belongs to the metallo-dependent hydrolases superfamily. Adenosine and AMP deaminases family. Adenine deaminase type 2 subfamily. Zn(2+) serves as cofactor.

The catalysed reaction is adenine + H2O + H(+) = hypoxanthine + NH4(+). Its function is as follows. Catalyzes the hydrolytic deamination of adenine to hypoxanthine. Plays an important role in the purine salvage pathway and in nitrogen catabolism. In Paraburkholderia phytofirmans (strain DSM 17436 / LMG 22146 / PsJN) (Burkholderia phytofirmans), this protein is Adenine deaminase.